We begin with the raw amino-acid sequence, 1895 residues long: MSEKEELPLTLTSIGAATATSDYHQRVGSSGEGISSSSSDVDPRFMQNSPTGLMISQSSSMCTVPPGMAATPPISSGSGLSQQLNNSSSSKLCQVEGCQKGARDASGRCISHGGGRRCQKPDCQKGAEGKTVYCKAHGGGRRCEYLGCTKGAEGSTDFCIAHGGGRRCNHEDCTRSAWGRTEFCVKHGGGARCKTYGCGKSASGPLPFCRAHGGGKKCSHEDCTGFARGRSGLCLMHGGGKRCQRENCTKSAEGLSGLCISHGGGRRCQSIGCTKGAKGSKMFCKACITKRPLTIDGGGNMGGVTTGDALNYLKAVKDKFEDSEKYDTFLEVLNDCKHQGVDTSGVIARLKDLFKGHDDLLLGFNTYLSKEYQITILPEDDFPIDFLDKVEGPYEMTYQQAQTVQANANMQPQTEYPSSSAVQSFSSGQPQIPTSAPDSSLLAKSNTSGITIIEHMSQQPLNVDKQVNDGYNWQKYGQKKVKGSKFPLSYYKCTYLGCPSKRKVERSLDGQVAEIVYKDRHNHEPPNQGKDGSTTYLSGSSTHINCMSSELTASQFSSNKTKIEQQEAASLATTIEYMSEASDNEEDSNGETSEGEKDEDEPEPKRRITEVQVSELADASDRTVREPRVIFQTTSEVDNLDDGYRWRKYGQKVVKGNPYPRFSSSKDYDVVIRYGRADISNEDFISHLRASLCRRGISVYEKFNEVDALPKCRVLIIVLTSTYVPSNLLNILEHQHTEDRVVYPIFYRLSPYDFVCNSKNYERFYLQDEPKKWQAALKEITQMPGYTLTDKSESELIDEIVRDALKVLCSADKVNMIGMDMQVEEILSLLCIESLDVRSIGIWGTVGIGKTTIAEEIFRKISVQYETCVVLKDLHKEVEVKGHDAVRENFLSEVLEVEPHVIRISDIKTSFLRSRLQRKRILVILDDVNDYRDVDTFLGTLNYFGPGSRIIMTSRNRRVFVLCKIDHVYEVKPLDIPKSLLLLDRGTCQIVLSPEVYKTLSLELVKFSNGNPQVLQFLSSIDREWNKLSQEVKTTSPIYIPGIFEKSCCGLDDNERGIFLDIACFFNRIDKDNVAMLLDGCGFSAHVGFRGLVDKSLLTISQHNLVDMLSFIQATGREIVRQESADRPGDRSRLWNADYIRHVFINDTGTSAIEGIFLDMLNLKFDANPNVFEKMCNLRLLKLYCSKAEEKHGVSFPQGLEYLPSKLRLLHWEYYPLSSLPKSFNPENLVELNLPSSCAKKLWKGKKARFCTTNSSLEKLKKMRLSYSDQLTKIPRLSSATNLEHIDLEGCNSLLSLSQSISYLKKLVFLNLKGCSKLENIPSMVDLESLEVLNLSGCSKLGNFPEISPNVKELYMGGTMIQEIPSSIKNLVLLEKLDLENSRHLKNLPTSIYKLKHLETLNLSGCISLERFPDSSRRMKCLRFLDLSRTDIKELPSSISYLTALDELLFVDSRRNSPVVTNPNANSTELMPSESSKLEILGTPADNEVVVGGTVEKTRGIERTPTILVKSREYLIPDDVVAVGGDIKGLRPPVLQLQPAMKLSHIPRGSTWDFVTHFAPPETVAPPSSSSEAREEEVETEETGAMFIPLGDKETCSFTVNKGDSSRTISNTSPIYASEGSFITCWQKGQLLGRGSLGSVYEGISADGDFFAFKEVSLLDQGSQAHEWIQQVEGGIALLSQLQHQNIVRYRGTTKDESNLYIFLELVTQGSLRKLYQRNQLGDSVVSLYTRQILDGLKYLHDKGFIHRNIKCANVLVDANGTVKLADFGLAKVMSLWRTPYWNWMAPEVILNPKDYDGYGTPADIWSLGCTVLEMLTGQIPYSDLEIGTALYNIGTGKLPKIPDILSLDARDFILTCLKVNPEERPTAAELLNHPFVNMPLPSSGSGSVSSLLRG.

The segment at M1–N85 is disordered. Residues T10–D22 are compositionally biased toward polar residues. The segment covering G28–S39 has biased composition (low complexity). Residues M46–C62 are compositionally biased toward polar residues. A compositionally biased stretch (low complexity) spans S75–N85. The PAH domain occupies R291 to E371. Residues A408–P417 show a composition bias toward polar residues. Disordered regions lie at residues A408–L442, Y517–S538, and E580–S620. The segment covering S418–S427 has biased composition (low complexity). Residues G428–L442 are compositionally biased toward polar residues. A DNA-binding region (WRKY 1) is located at residues N462 to P526. The WRKY 2 DNA-binding region spans S635–Y700. The region spanning K666–L808 is the TIR domain. The NB-ARC domain occupies I800–V1087. ATP is bound at residue G844–T851. 10 LRR repeats span residues K1206 to E1227, N1228 to R1249, K1259 to T1281, N1282 to L1304, K1306 to E1328, S1329 to V1351, K1352 to L1371, L1373 to L1395, H1397 to M1419, and C1421 to L1442. Positions E1562–T1583 are disordered. Residues W1626–V1877 form the Protein kinase domain. ATP-binding positions include L1632 to V1640 and K1654. D1758 is an active-site residue.

It belongs to the disease resistance X-TIR-NB-LRR-X family.

It is found in the nucleus. Functionally, transcription factor. Interacts specifically with the W box (5'-(T)TGAC[CT]-3'), a frequently occurring elicitor-responsive cis-acting element. May act also as a disease resistance protein with a serine/threonine-protein kinase activity. This chain is Probable WRKY transcription factor 19 (WRKY19), found in Arabidopsis thaliana (Mouse-ear cress).